The sequence spans 464 residues: Cysteine--tRNA ligase (464 aa).

Cys-30 lines the Zn(2+) pocket. The 'HIGH' region signature appears at Met-32–His-42. Zn(2+)-binding residues include Cys-214, His-239, and Glu-243. A 'KMSKS' region motif is present at residues Lys-271–Ser-275. Residue Lys-274 participates in ATP binding.

This sequence belongs to the class-I aminoacyl-tRNA synthetase family. Monomer. The cofactor is Zn(2+).

It localises to the cytoplasm. It carries out the reaction tRNA(Cys) + L-cysteine + ATP = L-cysteinyl-tRNA(Cys) + AMP + diphosphate. This chain is Cysteine--tRNA ligase, found in Janthinobacterium sp. (strain Marseille) (Minibacterium massiliensis).